The primary structure comprises 557 residues: Protein PNS1 (557 aa).

The tract at residues 1-58 (MSTEKQYQPQQPPPAYTGQGPDNGNAYGYPESYGKTETHSGDSCSGDTSMNPQQQGQQ) is disordered. Topologically, residues 1–99 (MSTEKQYQPQ…DNNKPKFNDW (99 aa)) are cytoplasmic. Over residues 41–58 (GDSCSGDTSMNPQQQGQQ) the composition is skewed to polar residues. A helical membrane pass occupies residues 100 to 120 (PFIIVFLLTLCGFIVVASLTL). Residues 121-147 (RAWSQTYSSTGSGIYHDFDTGTLNTNS) lie on the Extracellular side of the membrane. A helical membrane pass occupies residues 148–168 (VILLVFSVVIAIFFAFIGIVL). Over 169–174 (CRAYPK) the chain is Cytoplasmic. The chain crosses the membrane as a helical span at residues 175–195 (FFIYAGMIVNILAALGTAIMY). The Extracellular portion of the chain corresponds to 196-200 (MSLKY). The chain crosses the membrane as a helical span at residues 201-221 (WSAGIVFLIFTFMTAWCYWGM). Residues 222-246 (RSRIPLTVAILRVIVLAMKNCPQSL) lie on the Cytoplasmic side of the membrane. A helical membrane pass occupies residues 247 to 267 (FVSFFGTIVASAFAMLFSTVV). Residues 268–292 (VATYMKYDPSNTNSGCNVSGGDCSH) lie on the Extracellular side of the membrane. N-linked (GlcNAc...) asparagine glycosylation occurs at asparagine 284. Residues 293–313 (AKLIGVLVVVFFCGYYISEVI) traverse the membrane as a helical segment. The Cytoplasmic segment spans residues 314-350 (RNVMHCTVSGVFGSWYYRYKSDQGMPKWPAMGAFKRA). A helical membrane pass occupies residues 351-371 (MTYSFGSICFGSLIVSIIETF). Residues 372-393 (RQLLQLGKQAAIASTDNANWIR) lie on the Extracellular side of the membrane. The chain crosses the membrane as a helical span at residues 394–414 (IIFWLIDMLVGFIQWIAQYFN). At 415-454 (HYAYCIIALYGKPYLKAAKQTWYMFREKGIDALINDNLVN) the chain is on the cytoplasmic side. The helical transmembrane segment at 455–475 (VALGFYSLFASYMSCLFAFLY) threads the bilayer. The Extracellular segment spans residues 476 to 488 (LRFTKPGYNSDGD). A helical membrane pass occupies residues 489-509 (FNAPLMAFAFVIALQLTNIAN). At 510–557 (ETIRSGCATFFTALGHDPEVFQAQYPDRFDEIFRSYPQVLNKLTHQDV) the chain is on the cytoplasmic side.

Belongs to the CTL (choline transporter-like) family.

It is found in the cell membrane. Probably involved in transport through the plasma membrane. In Candida glabrata (strain ATCC 2001 / BCRC 20586 / JCM 3761 / NBRC 0622 / NRRL Y-65 / CBS 138) (Yeast), this protein is Protein PNS1 (PNS1).